The sequence spans 757 residues: Centrosomal protein of 68 kDa (757 aa).

Basic and acidic residues-rich tracts occupy residues 1-17 and 86-96; these read MALG…EDTK and ANREPVAERSE. Disordered regions lie at residues 1-47, 67-158, 192-259, 311-480, 509-551, and 597-618; these read MALG…RLEA, WIGT…PSLA, QPSS…GGDA, PGPQ…ESDD, PTGD…SGDP, and LDRW…GGEQ. The segment covering 125 to 144 has biased composition (polar residues); the sequence is LSSSEEFPQTLSLPRTTTIC. 2 stretches are compositionally biased toward low complexity: residues 192–206 and 224–240; these read QPSS…TGSS and VSSS…SSVV. S332 bears the Phosphoserine; by PLK1 mark. Over residues 339-355 the composition is skewed to polar residues; that stretch reads FSVSPASTLKSPTNVSP. 2 stretches are compositionally biased toward basic and acidic residues: residues 405–432 and 439–456; these read GSRD…KHLD and RTRD…EKRT. Residues 457 to 467 are compositionally biased toward polar residues; that stretch reads SQSARRPTCTE. 2 positions are modified to phosphoserine: S472 and S478. The segment covering 524 to 543 has biased composition (low complexity); it reads SDGPASFPSSSSQSQLPPGA.

In terms of assembly, interacts with CNTLN; the interaction recruits CEP68 to the centrosome. Interacts with the SCF(FBXW11) complex which contains SKP1, CUL1 and FBXW11; the interaction is probably mediated by FBXW11 and the complex also contains CDK5RAP2 and PCNT. Also interacts with F-box protein BTRC. Interacts with serine/threonine-protein kinase PLK1; the interaction leads to phosphorylation of CEP68 and its subsequent degradation. Interacts with NEK2; the interaction leads to phosphorylation of CEP68. Post-translationally, phosphorylation by PLK1 is required for binding to BTRC in prometaphase. Phosphorylated directly or indirectly by NEK2. NEK2-mediated phosphorylation promotes CEP68 dissociation from the centrosome and its degradation at the onset of mitosis. In terms of processing, ubiquitinated and targeted for proteasomal degradation in early mitosis by the SCF(BTRC) and/or SCF(FBXW11) E3 ubiquitin-protein ligase complexes. Degradation is complete by prometaphase and is required for removal of CDK5RAP2 from the peripheral pericentriolar material and subsequent centriole separation.

The protein resides in the cytoplasm. The protein localises to the cytoskeleton. It localises to the microtubule organizing center. It is found in the centrosome. Functionally, involved in maintenance of centrosome cohesion, probably as part of a linker structure which prevents centrosome splitting. Required for localization of CDK5RAP2 to the centrosome during interphase. Contributes to CROCC/rootletin filament formation. In Homo sapiens (Human), this protein is Centrosomal protein of 68 kDa (CEP68).